Reading from the N-terminus, the 446-residue chain is Methanogenesis regulatory protein FilR1 (446 aa).

Residues Asp297 to Ala416 form the Response regulatory domain. At Asp350 the chain carries 4-aspartylphosphate.

In terms of processing, phosphorylated by FilI.

Its function is as follows. Member of the two-component regulatory system FilI/FilRs, which is involved in the regulation of methanogenesis. Regulates its own expression, expression of the filI-filR2 operon, and of genes involved in methanogenesis such as acs1, acs4 and mtrABC. Acts by binding to the promoters. The polypeptide is Methanogenesis regulatory protein FilR1 (Methanothrix harundinacea (strain 6Ac) (Methanosaeta harundinacea)).